We begin with the raw amino-acid sequence, 454 residues long: Sensor histidine kinase RppB (454 aa).

The Periplasmic segment spans residues 1–13; that stretch reads MNTRRLFARSRLQ. A helical membrane pass occupies residues 14–34; it reads LAFWYALVMGGILTLLGLGVY. The Cytoplasmic portion of the chain corresponds to 35–186; sequence RAIVQANWMA…LAAFDAENKR (152 aa). Residues 187-207 traverse the membrane as a helical segment; it reads ILWILGLSFPIALGLVAFSSW. Over 208–454 the chain is Periplasmic; it reads GLAGLAMRPI…PIFSVPIVHS (247 aa). Residues 230 to 448 enclose the Histidine kinase domain; it reads NAAHELRSPL…LFTIQLPIFS (219 aa). H233 is modified (phosphohistidine; by autocatalysis).

It is found in the cell inner membrane. The enzyme catalyses ATP + protein L-histidine = ADP + protein N-phospho-L-histidine.. In terms of biological role, member of two-component regulatory system RppA/RppB, involved in the establishment of the appropriate stoichiometry between the 2 photosystems. It senses changes in the plastoquinone (PQ) redox poise. Another group shows this two-component pair, renamed NrsR/NrsS, controls the nickel-dependent expression of the nrsBACD operon; they suggest the photosystem-related activities seen earlier are due to the expression of NrsS (RppB) in the absence of its natural substrate NrsR (RppA). This Synechocystis sp. (strain ATCC 27184 / PCC 6803 / Kazusa) protein is Sensor histidine kinase RppB.